We begin with the raw amino-acid sequence, 1425 residues long: Zinc finger FYVE domain-containing protein 9 (1425 aa).

Disordered regions lie at residues 201 to 255 (ESTE…IGRD) and 291 to 352 (EDLT…SGRN). The span at 202-225 (STEKDMNSEKQMDPLNRPKTEGRS) shows a compositional bias: basic and acidic residues. Polar residues-rich tracts occupy residues 230 to 245 (CPTS…SPSQ) and 296 to 312 (KISS…SFSH). 2 positions are modified to phosphoserine: Ser-306 and Ser-668. Residues 699–758 (DSQAPNCMKCEARFTFTKRRHHCRACGKVFCASCCSLKCKLLYMDRKEARVCVICHSVLM) form an FYVE-type zinc finger. Cys-705, Cys-708, Cys-721, Cys-724, Cys-729, Cys-732, Cys-750, and Cys-753 together coordinate Zn(2+). Residues 767–823 (MSASSQSPNPNNPAEYCSTIPPLQQAQASGALSSPPPTVMVPVGVLKHPGAEVAQPR) are SBD.

As to quaternary structure, interacts (via the SBD region) with SMAD2; the interaction recruits SMAD2 to the TGF-beta receptor and is disrupted by phosphorylation of SMAD2 upon TGF-beta receptor activation. Interacts with SMAD3. Interacts with TGFBR1 and TGFBR2; the interaction recruits SMAD2 to the TGF-beta receptor. Interacts with PML. In terms of tissue distribution, ubiquitous. In the brain found primarily in the cerebrovascular smooth muscle cells and reactive astrocytes.

The protein resides in the cytoplasm. The protein localises to the early endosome membrane. In terms of biological role, early endosomal protein that functions to recruit SMAD2/SMAD3 to intracellular membranes and to the TGF-beta receptor. Plays a significant role in TGF-mediated signaling by regulating the subcellular location of SMAD2 and SMAD3 and modulating the transcriptional activity of the SMAD3/SMAD4 complex. Possibly associated with TGF-beta receptor internalization. The protein is Zinc finger FYVE domain-containing protein 9 (ZFYVE9) of Homo sapiens (Human).